We begin with the raw amino-acid sequence, 654 residues long: Phosphate transport system permease protein PstA homolog (654 aa).

12 helical membrane passes run 22-42 (LAFL…TEAT), 64-84 (AGIW…LIIA), 113-133 (ILSG…LSIF), 143-163 (LSLL…VISL), 266-286 (VLYI…FFAI), 303-323 (ISNF…ALFV), 368-388 (ELIC…FVFI), 417-437 (LVII…IAIW), 453-473 (FVID…GLSF), 486-506 (NGTS…LFLI), 535-555 (IFKI…ILSI), and 613-633 (VVFL…LFLL). One can recognise an ABC transmembrane type-1 1 domain in the interval 70-285 (LLVSFIVSIG…ILVSLLNFFA (216 aa)). The region spanning 413–623 (LVNTLVIILI…VFLILLIFFS (211 aa)) is the ABC transmembrane type-1 2 domain.

Belongs to the binding-protein-dependent transport system permease family. CysTW subfamily.

It localises to the cell membrane. Could be part of a binding-protein-dependent transport system for phosphate; probably responsible for the translocation of the substrate across the membrane. This Mycoplasma genitalium (strain ATCC 33530 / DSM 19775 / NCTC 10195 / G37) (Mycoplasmoides genitalium) protein is Phosphate transport system permease protein PstA homolog (pstA).